We begin with the raw amino-acid sequence, 98 residues long: Parvalbumin beta 1 (98 aa).

Residue Ser-1 is modified to N-acetylserine. 2 EF-hand domains span residues 32–67 (KIGL…FSAG) and 67–98 (GARA…MIKG). The Ca(2+) site is built by Asp-45, Asp-47, Ser-49, Phe-51, Glu-53, Glu-56, Asp-80, Asp-82, Asp-84, Lys-86, and Glu-91.

The protein belongs to the parvalbumin family.

Its function is as follows. In muscle, parvalbumin is thought to be involved in relaxation after contraction. It binds two calcium ions. The chain is Parvalbumin beta 1 from Macruronus magellanicus (Patagonian grenadier).